The following is a 630-amino-acid chain: ATP-dependent zinc metalloprotease FtsH (630 aa).

Topologically, residues 1–7 (MNNFMKN) are cytoplasmic. Residues 8–28 (IGFYLVLIALSILVAQFFVDT) traverse the membrane as a helical segment. The Periplasmic portion of the chain corresponds to 29–111 (DVNTIVDTDV…KTEPEPTAPW (83 aa)). A helical membrane pass occupies residues 112 to 132 (WTGMLAYILPIILLIGAWFFI). The Cytoplasmic segment spans residues 133 to 630 (MQRMQGGGSQ…ENREHENNDK (498 aa)). 203-210 (GPPGTGKT) is an ATP binding site. Residue H425 participates in Zn(2+) binding. The active site involves E426. Positions 429 and 501 each coordinate Zn(2+). Residues 601-630 (KLIKGEPLDDDSIDNSTDENENREHENNDK) form a disordered region. The segment covering 608–619 (LDDDSIDNSTDE) has biased composition (acidic residues). Over residues 620 to 630 (NENREHENNDK) the composition is skewed to basic and acidic residues.

The protein in the central section; belongs to the AAA ATPase family. In the C-terminal section; belongs to the peptidase M41 family. In terms of assembly, homohexamer. Zn(2+) is required as a cofactor.

It localises to the cell inner membrane. Functionally, acts as a processive, ATP-dependent zinc metallopeptidase for both cytoplasmic and membrane proteins. Plays a role in the quality control of integral membrane proteins. In Halothermothrix orenii (strain H 168 / OCM 544 / DSM 9562), this protein is ATP-dependent zinc metalloprotease FtsH.